A 276-amino-acid polypeptide reads, in one-letter code: Cruxhalorhodopsin-3 (276 aa).

A propeptide spanning residues 1–21 (MPAASTAATTLLQASQSEVLG) is cleaved from the precursor. Residues 22–25 (EIQS) are Extracellular-facing. The helical transmembrane segment at 26 to 51 (NFLLNSSLWVNIALAGVVILLFVAMG) threads the bilayer. Topologically, residues 52–57 (RELESS) are cytoplasmic. Residues 58-81 (RAKLIWVATMLVPLVSISSYAGLA) traverse the membrane as a helical segment. The Extracellular portion of the chain corresponds to 82–105 (SGLTVGFLQMPPGHALAGQEVLSP). Residues 106 to 127 (WGRYLTWTFSTPMILLALGLLA) form a helical membrane-spanning segment. Residues 128 to 130 (DTD) lie on the Cytoplasmic side of the membrane. Residues 131 to 154 (MASLFTAITMDIGMCITGLAAALV) form a helical membrane-spanning segment. Residues 155–157 (TSS) are Extracellular-facing. Residues 158-180 (HLLRWVFYGISCAFFIAVLYVLL) traverse the membrane as a helical segment. The Cytoplasmic portion of the chain corresponds to 181-192 (VEWPADAEAAGT). Residues 193-216 (SEIFGTLKLLTVVLWLGYPILWAL) form a helical membrane-spanning segment. Residues 217–225 (GSEGVALLS) are Extracellular-facing. A helical membrane pass occupies residues 226 to 254 (VGVTSWGYSGLDILAKYVFAFLLLRWVAA). Position 241 is an N6-(retinylidene)lysine (K241). Over 255-276 (NEDTVTQAGMSLGSGGAAPADD) the chain is Cytoplasmic.

Belongs to the archaeal/bacterial/fungal opsin family.

Its subcellular location is the cell membrane. Its function is as follows. Light-driven chloride pump. The protein is Cruxhalorhodopsin-3 (choP3) of Haloarcula vallismortis (Halobacterium vallismortis).